The following is a 355-amino-acid chain: Putative inositol monophosphatase 3 (355 aa).

The helical transmembrane segment at 16 to 36 threads the bilayer; it reads LPATIVAILLTFVLVYFLNFH. Mg(2+)-binding residues include E127, D167, L169, D170, and D292. E127 contributes to the substrate binding site. Substrate contacts are provided by residues 169 to 172 and D292; that span reads LDAT.

This sequence belongs to the inositol monophosphatase superfamily. The cofactor is Mg(2+).

It is found in the membrane. It catalyses the reaction a myo-inositol phosphate + H2O = myo-inositol + phosphate. It functions in the pathway polyol metabolism; myo-inositol biosynthesis; myo-inositol from D-glucose 6-phosphate: step 2/2. The chain is Putative inositol monophosphatase 3 from Drosophila melanogaster (Fruit fly).